The following is a 108-amino-acid chain: uncharacterized protein (108 aa).

This is an uncharacterized protein from Saccharomyces cerevisiae (strain ATCC 204508 / S288c) (Baker's yeast).